A 76-amino-acid polypeptide reads, in one-letter code: Translational regulator CsrA (76 aa).

It belongs to the CsrA/RsmA family. Homodimer; the beta-strands of each monomer intercalate to form a hydrophobic core, while the alpha-helices form wings that extend away from the core.

It is found in the cytoplasm. Functionally, a translational regulator that binds mRNA to regulate translation initiation and/or mRNA stability. Usually binds in the 5'-UTR at or near the Shine-Dalgarno sequence preventing ribosome-binding, thus repressing translation. Its main target seems to be the major flagellin gene, while its function is anatagonized by FliW. The chain is Translational regulator CsrA from Helicobacter pylori (strain J99 / ATCC 700824) (Campylobacter pylori J99).